The sequence spans 3625 residues: Spectinabilin polyketide synthase system protein NorA' (3625 aa).

Residues 33–459 form the Ketosynthase family 3 (KS3) 1 domain; it reads REPVAVVSMA…GTNAHVILEQ (427 aa). Active-site for beta-ketoacyl synthase 1 activity residues include C206, H341, and H381. One can recognise a Malonyl-CoA:ACP transacylase (MAT) 1 domain in the interval 564-881; it reads LVFPGQGSQW…SLGELFAGGR (318 aa). The tract at residues 930–1054 is N-terminal hotdog fold 1; it reads HPWWGAVTEL…GTLTRTARPA (125 aa). One can recognise a PKS/mFAS DH 1 domain in the interval 930–1200; that stretch reads HPWWGAVTEL…VRPLTPGSGA (271 aa). H962 serves as the catalytic Proton acceptor; for dehydratase activity 1. Residues 1066–1200 are C-terminal hotdog fold 1; the sequence is ADPLPVDRIY…VRPLTPGSGA (135 aa). D1125 serves as the catalytic Proton donor; for dehydratase activity 1. Residues 1443–1620 enclose the Ketoreductase (KR) 1 domain; the sequence is GTVLVTGAAG…LSLAWGLWAE (178 aa). In terms of domain architecture, Carrier 1 spans 1722-1797; sequence GAVLETVRAQ…SLAAHLLGRL (76 aa). Position 1757 is an O-(pantetheine 4'-phosphoryl)serine (S1757). Residues 1815–2231 enclose the Ketosynthase family 3 (KS3) 2 domain; the sequence is DEPIAIIGMA…GTNAHVVLEQ (417 aa). Residues C1978, H2113, and H2153 each act as for beta-ketoacyl synthase 2 activity in the active site. The 321-residue stretch at 2336-2656 folds into the Malonyl-CoA:ACP transacylase (MAT) 2 domain; it reads VFVFPGQGAQ…VAEAHTRGIA (321 aa). Positions 2704–2829 are N-terminal hotdog fold 2; the sequence is HPLLGARMEL…GLLSEEEPAT (126 aa). Residues 2704–2981 enclose the PKS/mFAS DH 2 domain; it reads HPLLGARMEL…ARPVPAGQLR (278 aa). H2736 (proton acceptor; for dehydratase activity 2) is an active-site residue. Positions 2842–2981 are C-terminal hotdog fold 2; sequence AEPIELVGFY…ARPVPAGQLR (140 aa). Catalysis depends on D2903, which acts as the Proton donor; for dehydratase activity 2. Positions 3182–3361 constitute a Ketoreductase (KR) 2 domain; the sequence is GTVLITGASG…QSLAWGLWSE (180 aa). The 76-residue stretch at 3462–3537 folds into the Carrier 2 domain; sequence RQLTDLVRAQ…ALAGHLSTRL (76 aa). Position 3497 is an O-(pantetheine 4'-phosphoryl)serine (S3497).

As to quaternary structure, the spectinabilin polyketide synthase complex is composed of 4 proteins, NorA, NorA', NorB and NorC. The complex comprises 6 modules with a total of 28 catalytic domains catalyzing 7 chain elongations. NorA comprises one module, NorA' two modules, NorB one module and NorC two modules. Pantetheine 4'-phosphate is required as a cofactor.

The enzyme catalyses 4-nitrobenzoyl-CoA + 6 (S)-methylmalonyl-CoA + malonyl-CoA + 6 NADPH + 12 H(+) = demethyldeoxyspectinabilin + 7 CO2 + 6 NADP(+) + 8 CoA + 5 H2O. Its pathway is antibiotic biosynthesis. It functions in the pathway polyketide biosynthesis. In terms of biological role, component of a type I modular polyketide synthase (PKS) that generates the backbone of the antibiotic spectinabilin (also known as neoaureothin), a nitroaryl-substituted polyketide metabolite. This PKS system accepts the unusual starter unit 4-nitrobenzoyl-CoA and extends it by 6 molecules of (S)-methylmalonyl-CoA and a single molecule of malonyl-CoA. This is Spectinabilin polyketide synthase system protein NorA' from Streptomyces orinoci (Streptoverticillium orinoci).